The primary structure comprises 102 residues: Large ribosomal subunit protein bL21 (102 aa).

It belongs to the bacterial ribosomal protein bL21 family. Part of the 50S ribosomal subunit. Contacts protein L20.

In terms of biological role, this protein binds to 23S rRNA in the presence of protein L20. This chain is Large ribosomal subunit protein bL21, found in Lachnospira eligens (strain ATCC 27750 / DSM 3376 / VPI C15-48 / C15-B4) (Eubacterium eligens).